The primary structure comprises 437 residues: MSEVLPLITRRGDRIAFVSGLRTPFARQATAYHGVPALELGKLVTSELLVRTGIDPELIELLVFGQVVQMPEAPNIAREIVLGTGMSVHTDAYSVSRACATSFQAVANVAESIMAGTVEVGIAGGADSSSVLPIGVSKALARTLVDMNKARTLGQKLKLLSGLRPKDLLPVAPAVAEYSTGLRMGDTAEQMAKTYGITREEQDELAHRSHKLAAQAWESGVLRDEVMTAYVPPYEKALSEDNNVRHDSALEQYSRLRPAFDRRHGTVTAANSTPLTDGAAAVLMMSESRAKSLGLTPLGYLRSYAFSAIGVQRDMLLGPAYASPLALARAGVKLADLTLIDMHEAFAAQTLANLKLFASDEFARHQLGRNAALGEVDRAKFNVLGGSIAYGHPFAATGARMITQTLNELRRRGGGLGLTTACAAGGLGAAMVLEVTP.

The active-site Acyl-thioester intermediate is the cysteine 99. Residues histidine 392 and cysteine 422 each act as proton acceptor in the active site.

It belongs to the thiolase-like superfamily. Thiolase family. In terms of assembly, heterotetramer of two alpha chains (FadJ) and two beta chains (FadI).

The protein localises to the cytoplasm. It carries out the reaction an acyl-CoA + acetyl-CoA = a 3-oxoacyl-CoA + CoA. Its pathway is lipid metabolism; fatty acid beta-oxidation. In terms of biological role, catalyzes the final step of fatty acid oxidation in which acetyl-CoA is released and the CoA ester of a fatty acid two carbons shorter is formed. This is 3-ketoacyl-CoA thiolase from Pectobacterium carotovorum subsp. carotovorum (strain PC1).